The sequence spans 549 residues: Hydroxylamine reductase (549 aa).

Residues Cys5, Cys8, Cys17, and Cys23 each contribute to the [4Fe-4S] cluster site. Residues His250, Glu274, Cys318, Cys404, Cys432, Cys457, Glu491, and Lys493 each coordinate hybrid [4Fe-2O-2S] cluster. The residue at position 404 (Cys404) is a Cysteine persulfide.

Belongs to the HCP family. It depends on [4Fe-4S] cluster as a cofactor. Requires hybrid [4Fe-2O-2S] cluster as cofactor.

It localises to the cytoplasm. The enzyme catalyses A + NH4(+) + H2O = hydroxylamine + AH2 + H(+). Catalyzes the reduction of hydroxylamine to form NH(3) and H(2)O. The protein is Hydroxylamine reductase of Geobacter metallireducens (strain ATCC 53774 / DSM 7210 / GS-15).